A 345-amino-acid chain; its full sequence is Aspartate--ammonia ligase (345 aa).

Belongs to the class-II aminoacyl-tRNA synthetase family. AsnA subfamily.

The protein resides in the cytoplasm. It catalyses the reaction L-aspartate + NH4(+) + ATP = L-asparagine + AMP + diphosphate + H(+). It functions in the pathway amino-acid biosynthesis; L-asparagine biosynthesis; L-asparagine from L-aspartate (ammonia route): step 1/1. The protein is Aspartate--ammonia ligase of Bacteroides thetaiotaomicron (strain ATCC 29148 / DSM 2079 / JCM 5827 / CCUG 10774 / NCTC 10582 / VPI-5482 / E50).